The chain runs to 284 residues: Pantothenate synthetase (284 aa).

30–37 (MGNLHNAH) is an ATP binding site. His-37 serves as the catalytic Proton donor. Gln-61 is a (R)-pantoate binding site. Gln-61 is a binding site for beta-alanine. Position 149–152 (149–152 (GIKD)) interacts with ATP. Gln-155 is a (R)-pantoate binding site. ATP is bound by residues Val-178 and 186–189 (MSSR).

It belongs to the pantothenate synthetase family. As to quaternary structure, homodimer.

It is found in the cytoplasm. It catalyses the reaction (R)-pantoate + beta-alanine + ATP = (R)-pantothenate + AMP + diphosphate + H(+). The protein operates within cofactor biosynthesis; (R)-pantothenate biosynthesis; (R)-pantothenate from (R)-pantoate and beta-alanine: step 1/1. Functionally, catalyzes the condensation of pantoate with beta-alanine in an ATP-dependent reaction via a pantoyl-adenylate intermediate. This chain is Pantothenate synthetase, found in Saccharophagus degradans (strain 2-40 / ATCC 43961 / DSM 17024).